The sequence spans 404 residues: Cysteine desulfurase IscS (404 aa).

Residues 75–76, N155, Q183, and 203–205 contribute to the pyridoxal 5'-phosphate site; these read AT and SAH. The residue at position 206 (K206) is an N6-(pyridoxal phosphate)lysine. Residue T243 participates in pyridoxal 5'-phosphate binding. Residue C328 is the Cysteine persulfide intermediate of the active site. A [2Fe-2S] cluster-binding site is contributed by C328.

Belongs to the class-V pyridoxal-phosphate-dependent aminotransferase family. NifS/IscS subfamily. As to quaternary structure, homodimer. Forms a heterotetramer with IscU, interacts with other sulfur acceptors. Pyridoxal 5'-phosphate is required as a cofactor.

The protein resides in the cytoplasm. It catalyses the reaction (sulfur carrier)-H + L-cysteine = (sulfur carrier)-SH + L-alanine. The protein operates within cofactor biosynthesis; iron-sulfur cluster biosynthesis. Its function is as follows. Master enzyme that delivers sulfur to a number of partners involved in Fe-S cluster assembly, tRNA modification or cofactor biosynthesis. Catalyzes the removal of elemental sulfur atoms from cysteine to produce alanine. Functions as a sulfur delivery protein for Fe-S cluster synthesis onto IscU, an Fe-S scaffold assembly protein, as well as other S acceptor proteins. In Buchnera aphidicola subsp. Baizongia pistaciae (strain Bp), this protein is Cysteine desulfurase IscS.